The following is a 175-amino-acid chain: NADH-ubiquinone oxidoreductase chain 6 (175 aa).

The next 5 membrane-spanning stretches (helical) occupy residues 1–21, 25–45, 47–67, 88–108, and 149–169; these read MMTY…VGFS, SPIY…GIVL, FGGS…MMVV, VVLG…YYVL, and YGTW…VVIM.

This sequence belongs to the complex I subunit 6 family. As to quaternary structure, core subunit of respiratory chain NADH dehydrogenase (Complex I) which is composed of 45 different subunits.

Its subcellular location is the mitochondrion inner membrane. It carries out the reaction a ubiquinone + NADH + 5 H(+)(in) = a ubiquinol + NAD(+) + 4 H(+)(out). Its function is as follows. Core subunit of the mitochondrial membrane respiratory chain NADH dehydrogenase (Complex I) which catalyzes electron transfer from NADH through the respiratory chain, using ubiquinone as an electron acceptor. Essential for the catalytic activity and assembly of complex I. This is NADH-ubiquinone oxidoreductase chain 6 (MT-ND6) from Ovis aries (Sheep).